A 512-amino-acid chain; its full sequence is MMLSEQAQKWFPTHVQVTVLQAKDLKPKGKSGTNDTYTIIQLGKEKYSTSVAEKTLEPVWKEEASFELPGLLIQGSPEKYILFLIVMHRSLVGLDKFLGQVAINLNDIFEDKQRRKTEWFRLESKQGKRIKNRGEIKVNIQFMRNNMTASMFDLSMKDKTRSPFAKLKDKMKGRKNDGTFSDTSSAIIPSTHMPDANSEFSSGEIQMKSKPKKPFLLGPQRLSSAHSMSDLSGSHMSSEKLKAGTIGQTHLLGHQLDSFGTVPESGSLKSPHRRTLSFDTSKMNQPDSIVDEGELCFGRQNDPFTNVTASLPQKFATLPRKKNPFEESSETWDSSMNLFSKPIEIRKENKREKREKVSLFERVTGKKDSRRSDKLNNGGSDSPCDLKSPNAFSENRQDYFDYESTNPFTAKFRASNIMPSSSFHMSPTSNEDLRKIPDSNPFDATAGYRSLTYEEVLQELVKHKELLRRKDTHIRELEDYIDNLLVRVMEETPSILRVPYEPSRKAGKFSNS.

The region spanning Met-1–Phe-120 is the C2 domain. The tract at residues Val-15–Ala-102 is necessary for its cellular translocation to the plasma membrane. Disordered stretches follow at residues Asp-169–Glu-239 and Val-262–Gln-285. Over residues Gly-178–Ile-188 the composition is skewed to polar residues. Residues His-226–Met-236 show a composition bias toward low complexity. The residue at position 227 (Ser-227) is a Phosphoserine; by MARK2. Position 277 is a phosphoserine (Ser-277). Positions Asn-323 to Phe-325 match the NPF 1 motif. The span at Glu-361–Lys-374 shows a compositional bias: basic and acidic residues. The interval Glu-361–Phe-392 is disordered. 2 short sequence motifs (NPF) span residues Asn-406–Phe-408 and Asn-440–Phe-442. In terms of domain architecture, FIP-RBD spans Pro-437–Pro-499. A necessary for interaction with AP2A1, RAB11A, subcellular location, endocytosis activity and homooligomerization region spans residues Glu-465–Ser-512.

In terms of assembly, homooligomerizes in a Rab11-independent manner. Forms a heterooligomeric complex with RAB11FIP4. Interacts with AP2A1, MYO5B, RAB25 and REPS1. Interacts with RAB11A and RAB11B (activated GTP-bound form). Interacts with NPC1L1. Interacts (via NPF motifs) with EHD1 and EHD3. Interacts with TICAM2; this interaction directs RAB11FIP2 to the phagosome. Interacts with RAB14 and RAB25 (GTP-bound forms). In terms of processing, phosphorylation at Ser-227 by MARK2 regulates epithelial cell polarity.

Its subcellular location is the cell projection. It localises to the phagocytic cup. It is found in the cell membrane. The protein localises to the recycling endosome membrane. Its function is as follows. A Rab11 effector binding preferentially phosphatidylinositol 3,4,5-trisphosphate (PtdInsP3) and phosphatidic acid (PA) and acting in the regulation of the transport of vesicles from the endosomal recycling compartment (ERC) to the plasma membrane. Involved in insulin granule exocytosis. Also involved in receptor-mediated endocytosis and membrane trafficking of recycling endosomes, probably originating from clathrin-coated vesicles. Required in a complex with MYO5B and RAB11 for the transport of NPC1L1 to the plasma membrane. Also acts as a regulator of cell polarity. Plays an essential role in phagocytosis through a mechanism involving TICAM2, RAC1 and CDC42 Rho GTPases for controlling actin-dynamics. This chain is Rab11 family-interacting protein 2 (RAB11FIP2), found in Homo sapiens (Human).